The sequence spans 298 residues: Protease HtpX homolog (298 aa).

2 helical membrane-spanning segments follow: residues 14–34 and 39–59; these read VVLLVVFFALLALIGASAGYL and YAMGLVLALVIGVIYATSMIF. Position 143 (H143) interacts with Zn(2+). Residue E144 is part of the active site. H147 lines the Zn(2+) pocket. 2 helical membrane-spanning segments follow: residues 158 to 178 and 197 to 217; these read IAVALASAVTVISSIGGRMLW and IITLLLSLLSLLLAPLVASLI. Residue E226 participates in Zn(2+) binding.

This sequence belongs to the peptidase M48B family. The cofactor is Zn(2+).

Its subcellular location is the cell membrane. This chain is Protease HtpX homolog, found in Streptococcus pyogenes serotype M1.